The following is a 537-amino-acid chain: Polyadenylate-binding protein 6 (537 aa).

4 consecutive RRM domains span residues 21-99 (GSLY…WSQR), 112-188 (ANLY…KFIN), 202-279 (TNVY…KALK), and 304-381 (SNLY…VAER). Positions 503-537 (KATTSEENRKEERRLTLSGKLSPEVKVEESGKQLQ) are disordered. Basic and acidic residues-rich tracts occupy residues 506 to 517 (TSEENRKEERRL) and 525 to 537 (PEVK…KQLQ).

This sequence belongs to the polyadenylate-binding protein type-1 family. As to expression, expressed at low levels in leaves and young seedlings.

It localises to the cytoplasm. It is found in the nucleus. Functionally, binds the poly(A) tail of mRNA. Appears to be an important mediator of the multiple roles of the poly(A) tail in mRNA biogenesis, stability and translation. This chain is Polyadenylate-binding protein 6 (PAB6), found in Arabidopsis thaliana (Mouse-ear cress).